A 34-amino-acid polypeptide reads, in one-letter code: Photosystem I reaction center subunit XII (34 aa).

The chain crosses the membrane as a helical span at residues 10-32 (IYIALVVAAHAAILALRLSVSLY).

Belongs to the PsaM family.

Its subcellular location is the cellular thylakoid membrane. The sequence is that of Photosystem I reaction center subunit XII from Synechococcus sp. (strain RCC307).